Consider the following 263-residue polypeptide: Endolytic peptidoglycan transglycosylase RlpA (263 aa).

Positions 1 to 16 (MNRIYLYLLIVLILAG) are cleaved as a signal peptide. Cys17 carries the N-palmitoyl cysteine lipid modification. Cys17 carries S-diacylglycerol cysteine lipidation. The 76-residue stretch at 182–257 (KNNALEYVIQ…AGYDSAFIKT (76 aa)) folds into the SPOR domain.

Belongs to the RlpA family.

Its subcellular location is the cell membrane. Its function is as follows. Lytic transglycosylase with a strong preference for naked glycan strands that lack stem peptides. This is Endolytic peptidoglycan transglycosylase RlpA from Vibrio cholerae serotype O1 (strain ATCC 39315 / El Tor Inaba N16961).